Here is a 367-residue protein sequence, read N- to C-terminus: Outer membrane porin C (367 aa).

Residues 1-21 form the signal peptide; the sequence is MKVKVLSLLVPALLVAGAANA.

The protein belongs to the Gram-negative porin family. Homotrimer.

Its subcellular location is the cell outer membrane. In terms of biological role, forms pores that allow passive diffusion of small molecules across the outer membrane. The protein is Outer membrane porin C (ompC) of Escherichia coli O157:H7.